A 1027-amino-acid polypeptide reads, in one-letter code: Protein translocase subunit SecA (1027 aa).

Residues Gln143, 161–165 (GEGKT), and Asp661 each bind ATP. The segment at 981 to 1027 (EESGTSNADNAGDNGPQTVIAEKKPGRNDLCPCGSGKKYKNCHGQQP) is disordered. Positions 1011, 1013, 1022, and 1023 each coordinate Zn(2+).

This sequence belongs to the SecA family. As to quaternary structure, monomer and homodimer. Part of the essential Sec protein translocation apparatus which comprises SecA, SecYEG and auxiliary proteins SecDF. Other proteins may also be involved. Requires Zn(2+) as cofactor.

The protein localises to the cell inner membrane. It is found in the cytoplasm. It carries out the reaction ATP + H2O + cellular proteinSide 1 = ADP + phosphate + cellular proteinSide 2.. In terms of biological role, part of the Sec protein translocase complex. Interacts with the SecYEG preprotein conducting channel. Has a central role in coupling the hydrolysis of ATP to the transfer of proteins into and across the cell membrane, serving as an ATP-driven molecular motor driving the stepwise translocation of polypeptide chains across the membrane. The protein is Protein translocase subunit SecA of Chlorobium limicola (strain DSM 245 / NBRC 103803 / 6330).